Reading from the N-terminus, the 334-residue chain is Nucleoid-associated protein PFL_1060 (334 aa).

It belongs to the YejK family.

It is found in the cytoplasm. It localises to the nucleoid. The protein is Nucleoid-associated protein PFL_1060 of Pseudomonas fluorescens (strain ATCC BAA-477 / NRRL B-23932 / Pf-5).